Reading from the N-terminus, the 83-residue chain is Gas vesicle protein G2 (83 aa).

It belongs to the gas vesicle GvpG family. In terms of assembly, gvpF to GvpM interact with each other in vitro, and may form multi-subunit complex(es).

It is found in the gas vesicle. Proteins GvpF to GvpM might be involved in nucleating gas vesicle formation. A minor component of the gas vesicle. Gas vesicles are hollow, gas filled proteinaceous nanostructures found in several microbial planktonic microorganisms. They allow positioning of halobacteria at the optimal depth for growth in the poorly aerated, shallow brine pools of their habitat. In terms of biological role, expression of 2 c-vac DNA fragments containing 2 divergently transcribed regions (gvpE-gvpF-gvpG-gvpH-gvpI-gvpJ-gvpK-gvpL-gvpM and gvpA-gvpC-gvpN-gvpO) allows H.volcanii to produce gas vesicles. The sequence is that of Gas vesicle protein G2 from Halobacterium salinarum (strain ATCC 700922 / JCM 11081 / NRC-1) (Halobacterium halobium).